The chain runs to 191 residues: 3-hydroxyanthranilate 3,4-dioxygenase 2 (191 aa).

R48 provides a ligand contact to O2. Positions 52, 73, and 111 each coordinate Fe cation. E73 lines the substrate pocket. Residues R115 and E125 each coordinate substrate.

It belongs to the 3-HAO family. Fe(2+) is required as a cofactor.

It is found in the cytoplasm. The enzyme catalyses 3-hydroxyanthranilate + O2 = (2Z,4Z)-2-amino-3-carboxymuconate 6-semialdehyde. Its pathway is cofactor biosynthesis; NAD(+) biosynthesis; quinolinate from L-kynurenine: step 3/3. Its function is as follows. Catalyzes the oxidative ring opening of 3-hydroxyanthranilate to 2-amino-3-carboxymuconate semialdehyde, which spontaneously cyclizes to quinolinate. The protein is 3-hydroxyanthranilate 3,4-dioxygenase 2 (bna1-2) of Aspergillus clavatus (strain ATCC 1007 / CBS 513.65 / DSM 816 / NCTC 3887 / NRRL 1 / QM 1276 / 107).